Reading from the N-terminus, the 553-residue chain is Arginine--tRNA ligase (553 aa).

The short motif at Ala130–Gly140 is the 'HIGH' region element.

The protein belongs to the class-I aminoacyl-tRNA synthetase family. In terms of assembly, monomer.

The protein resides in the cytoplasm. It carries out the reaction tRNA(Arg) + L-arginine + ATP = L-arginyl-tRNA(Arg) + AMP + diphosphate. This is Arginine--tRNA ligase from Corynebacterium aurimucosum (strain ATCC 700975 / DSM 44827 / CIP 107346 / CN-1) (Corynebacterium nigricans).